The primary structure comprises 319 residues: Geranylgeranyl pyrophosphate synthase (319 aa).

Residues lysine 42, arginine 45, and histidine 74 each contribute to the isopentenyl diphosphate site. Residues aspartate 81 and aspartate 85 each coordinate Mg(2+). Arginine 90 provides a ligand contact to dimethylallyl diphosphate. Arginine 91 is a binding site for isopentenyl diphosphate. Dimethylallyl diphosphate-binding residues include lysine 172, threonine 173, glutamine 210, lysine 226, and lysine 236.

The protein belongs to the FPP/GGPP synthase family. As to quaternary structure, homodimer. The cofactor is Mg(2+).

It carries out the reaction isopentenyl diphosphate + dimethylallyl diphosphate = (2E)-geranyl diphosphate + diphosphate. The enzyme catalyses isopentenyl diphosphate + (2E)-geranyl diphosphate = (2E,6E)-farnesyl diphosphate + diphosphate. It catalyses the reaction isopentenyl diphosphate + (2E,6E)-farnesyl diphosphate = (2E,6E,10E)-geranylgeranyl diphosphate + diphosphate. The protein operates within isoprenoid biosynthesis; geranyl diphosphate biosynthesis; geranyl diphosphate from dimethylallyl diphosphate and isopentenyl diphosphate: step 1/1. It participates in isoprenoid biosynthesis; farnesyl diphosphate biosynthesis; farnesyl diphosphate from geranyl diphosphate and isopentenyl diphosphate: step 1/1. Its pathway is isoprenoid biosynthesis; geranylgeranyl diphosphate biosynthesis; geranylgeranyl diphosphate from farnesyl diphosphate and isopentenyl diphosphate: step 1/1. Functionally, catalyzes the addition of 3 molecules of isopentenyl diphosphate (IPP) onto dimethylallyl diphosphate (DMAPP) to form geranylgeranyl pyrophosphate (GGPP). Catalyzes the synthesis of geranylgeranyl pyrophosphate as a major product and of farnesyl pyrophosphate in smaller amounts. The protein is Geranylgeranyl pyrophosphate synthase of Geoglobus acetivorans.